The following is an 80-amino-acid chain: SPI-1 type 3 secretion system needle filament protein (80 aa).

The protein belongs to the SctF family. As to quaternary structure, the core secretion machinery of the T3SS is composed of approximately 20 different proteins, including cytoplasmic components, a base, an export apparatus and a needle. This subunit polymerizes and forms the helical needle filament. Interacts with the needle tip protein SipD/SctA. Interacts with the needle adapter protein PrgJ/SctI, the secretin InvG/SctC and the minor export apparatus protein SpaP/SctR. In vitro, the needle protomer refolds spontaneously to extend the needle from the distal end.

It is found in the secreted. It localises to the cell surface. With respect to regulation, binding of bile salts, including deoxycholate, to the PrgI:SipD interface may inhibit the T3SS function. Its function is as follows. Component of the type III secretion system (T3SS), also called injectisome, which is used to inject bacterial effector proteins into eukaryotic host cells. PrgI/SctF1 forms the external needle filament that protrudes from the bacterial surface. Is probably involved in the transduction of an activating signal, thought to be mediated by the distal tip of the needle filament, to the secretion machine. Required for invasion of epithelial cells. Required for the secretion of the effector protein SptP. Functionally, during infection, can induce innate immune responses. The needle proteins interact with host TLR2 or TLR4, and induce signaling by NF-kappa-B and/or AP-1. This activation is MyD88 dependent and results in increased expression of cytokines, including TNF-alpha, IL-6 and IL-8. In Salmonella typhimurium (strain LT2 / SGSC1412 / ATCC 700720), this protein is SPI-1 type 3 secretion system needle filament protein.